The chain runs to 418 residues: Ig-like V-type domain-containing protein FAM187A (418 aa).

The signal sequence occupies residues 1–18 (MRLAPTTVLLWAWGSLQA). Residues 19–376 (FEIVEKENIF…ASLSDPETRT (358 aa)) lie on the Extracellular side of the membrane. Positions 267-361 (PWVPQVPIQF…IAGFRLGVTS (95 aa)) constitute an Ig-like V-type domain. Cysteine 289 and cysteine 345 are oxidised to a cystine. N-linked (GlcNAc...) asparagine glycosylation occurs at asparagine 317. A helical transmembrane segment spans residues 377–397 (AVELTLIGYLLIAVVFVTIHL). The Cytoplasmic segment spans residues 398–418 (CRCCCQSRCCPNFSAQTLLQL).

The protein belongs to the FAM187 family.

The protein localises to the membrane. This is Ig-like V-type domain-containing protein FAM187A (Fam187a) from Rattus norvegicus (Rat).